Here is a 732-residue protein sequence, read N- to C-terminus: E3 ubiquitin-protein ligase hel2 (732 aa).

The disordered stretch occupies residues 1–48 (MSPSGPNLNNKEHNRASEKKNSRTHNKKTNRNQSKEKPVSSRSVETPK). Basic and acidic residues predominate over residues 10-21 (NKEHNRASEKKN). An RING-type zinc finger spans residues 81 to 121 (CFICAEGITYSCVLPCNHRMCHVCALRLRALYKTKECTFCK). The LIM zinc-binding domain maps to 245–315 (PKCEFCNTHF…RECLERKFVV (71 aa)). 3 disordered regions span residues 345-380 (IIPQ…NETA), 411-501 (DFGF…QHQQ), and 623-732 (HDGP…FHIG). 2 stretches are compositionally biased toward polar residues: residues 366–380 (SSTP…NETA) and 415–433 (TLSN…TRTI). Residues 457–468 (SSSAPSVPVSAP) show a composition bias toward low complexity. Serine 482 bears the Phosphoserine mark. 2 stretches are compositionally biased toward polar residues: residues 490–501 (PMASSEQAQHQQ) and 629–654 (SAPS…NTPS). The segment covering 701–713 (STPNTSSNRNSNT) has biased composition (low complexity).

The protein belongs to the ZNF598/HEL2 family.

The protein resides in the cytoplasm. It carries out the reaction S-ubiquitinyl-[E2 ubiquitin-conjugating enzyme]-L-cysteine + [acceptor protein]-L-lysine = [E2 ubiquitin-conjugating enzyme]-L-cysteine + N(6)-ubiquitinyl-[acceptor protein]-L-lysine.. Its pathway is protein modification; protein ubiquitination. Functionally, E3 ubiquitin-protein ligase that plays a key role in the ribosome quality control (RQC), a pathway that takes place when a ribosome has stalled during translation, leading to degradation of nascent peptide chains. Activated when ribosomes are stalled within an mRNA following translation of prematurely polyadenylated mRNAs. Acts as a ribosome collision sensor: specifically recognizes and binds collided ribosome and ubiquitinates the 40S ribosomal proteins rps20/uS10 and rps3/uS3. Catalyzes 'Lys-63'-linked polyubiquitination of rps20/uS10, promoting recruitment of the RQT (ribosome quality control trigger) complex, which drives the disassembly of stalled ribosomes, followed by degradation of nascent peptides. The protein is E3 ubiquitin-protein ligase hel2 of Schizosaccharomyces pombe (strain 972 / ATCC 24843) (Fission yeast).